Consider the following 82-residue polypeptide: Acyl carrier protein (82 aa).

A Carrier domain is found at 4–79 (PEMEERLRKI…DALNYLETHQ (76 aa)). Serine 39 carries the post-translational modification O-(pantetheine 4'-phosphoryl)serine.

Belongs to the acyl carrier protein (ACP) family. Post-translationally, 4'-phosphopantetheine is transferred from CoA to a specific serine of apo-ACP by AcpS. This modification is essential for activity because fatty acids are bound in thioester linkage to the sulfhydryl of the prosthetic group.

The protein localises to the cytoplasm. It functions in the pathway lipid metabolism; fatty acid biosynthesis. Carrier of the growing fatty acid chain in fatty acid biosynthesis. This Chloroflexus aurantiacus (strain ATCC 29366 / DSM 635 / J-10-fl) protein is Acyl carrier protein.